Here is a 63-residue protein sequence, read N- to C-terminus: uncharacterized protein (63 aa).

This is an uncharacterized protein from Thermoproteus tenax virus 1 (strain KRA1) (TTV1).